Here is a 709-residue protein sequence, read N- to C-terminus: DNA ligase (709 aa).

NAD(+) is bound by residues 34 to 38, 83 to 84, and glutamate 115; these read DAEYD and SL. The active-site N6-AMP-lysine intermediate is the lysine 117. 4 residues coordinate NAD(+): arginine 138, glutamate 185, lysine 301, and lysine 325. The Zn(2+) site is built by cysteine 419, cysteine 422, cysteine 437, and cysteine 443. Residues 602–691 form the BRCT domain; sequence RQSDTLAGKT…AEPPPSPPPP (90 aa). The disordered stretch occupies residues 679–709; the sequence is GTTAEPPPSPPPPPPETNTDGNQLLLPLDGE. The span at 683-694 shows a compositional bias: pro residues; the sequence is EPPPSPPPPPPE.

This sequence belongs to the NAD-dependent DNA ligase family. LigA subfamily. Requires Mg(2+) as cofactor. The cofactor is Mn(2+).

It catalyses the reaction NAD(+) + (deoxyribonucleotide)n-3'-hydroxyl + 5'-phospho-(deoxyribonucleotide)m = (deoxyribonucleotide)n+m + AMP + beta-nicotinamide D-nucleotide.. Its function is as follows. DNA ligase that catalyzes the formation of phosphodiester linkages between 5'-phosphoryl and 3'-hydroxyl groups in double-stranded DNA using NAD as a coenzyme and as the energy source for the reaction. It is essential for DNA replication and repair of damaged DNA. This Chloroflexus aurantiacus (strain ATCC 29364 / DSM 637 / Y-400-fl) protein is DNA ligase.